The primary structure comprises 1135 residues: DNA-directed RNA polymerase I subunit RPA2 (1135 aa).

A disordered region spans residues Met1 to Ile26. Arg180 is an RNA binding site. Positions Val194–Phe208 are loop B. The loop A stretch occupies residues Leu236–Leu247. Residue Asp367 coordinates RNA. 2 fork loop regions span residues Leu439–Leu453 and Arg474–Leu489. Residue Asp755 coordinates Mg(2+). Residue Lys890 coordinates RNA. DNA is bound by residues Lys1020 and Arg1036. Ser1051 is subject to Phosphoserine. The Zn(2+) site is built by Cys1070, Cys1073, Cys1098, and Cys1101. The segment at Cys1070–Cys1101 adopts a C4-type zinc-finger fold.

The protein belongs to the RNA polymerase beta chain family. Component of the RNA polymerase I (Pol I) complex consisting of 13 subunits: a ten-subunit catalytic core composed of POLR1A/RPA1, POLR1B/RPA2, POLR1C/RPAC1, POLR1D/RPAC2, POLR1H/RPA12, POLR2E/RPABC1, POLR2F/RPABC2, POLR2H/RPABC3, POLR2K/RPABC4 and POLR2L/RPABC5; a mobile stalk subunit POLR1F/RPA43 protruding from the core and additional subunits homologous to general transcription factors POLR1E/RPA49 and POLR1G/RPA34. Part of Pol I pre-initiation complex (PIC), in which Pol I core assembles with RRN3 and promoter-bound UTBF and SL1/TIF-IB complex. Requires Mg(2+) as cofactor.

The protein resides in the nucleus. The protein localises to the nucleolus. It localises to the chromosome. The catalysed reaction is RNA(n) + a ribonucleoside 5'-triphosphate = RNA(n+1) + diphosphate. In terms of biological role, catalytic core component of RNA polymerase I (Pol I), a DNA-dependent RNA polymerase which synthesizes ribosomal RNA precursors using the four ribonucleoside triphosphates as substrates. Transcribes 47S pre-rRNAs from multicopy rRNA gene clusters, giving rise to 5.8S, 18S and 28S ribosomal RNAs. Pol I-mediated transcription cycle proceeds through transcription initiation, transcription elongation and transcription termination stages. During transcription initiation, Pol I pre-initiation complex (PIC) is recruited by the selectivity factor 1 (SL1/TIF-IB) complex bound to the core promoter that precedes an rDNA repeat unit. The PIC assembly bends the promoter favoring the formation of the transcription bubble and promoter escape. Once the polymerase has escaped from the promoter it enters the elongation phase during which RNA is actively polymerized, based on complementarity with the template DNA strand. Highly processive, assembles in structures referred to as 'Miller trees' where many elongating Pol I complexes queue and transcribe the same rDNA coding regions. At terminator sequences downstream of the rDNA gene, PTRF interacts with Pol I and halts Pol I transcription leading to the release of the RNA transcript and polymerase from the DNA. Forms Pol I active center together with the largest subunit POLR1A/RPA1. Appends one nucleotide at a time to the 3' end of the nascent RNA, with POLR1A/RPA1 contributing a Mg(2+)-coordinating DxDGD motif, and POLR1B/RPA2 participating in the coordination of a second Mg(2+) ion and providing lysine residues believed to facilitate Watson-Crick base pairing between the incoming nucleotide and the template base. Typically, Mg(2+) ions direct a 5' nucleoside triphosphate to form a phosphodiester bond with the 3' hydroxyl of the preceding nucleotide of the nascent RNA, with the elimination of pyrophosphate. Has proofreading activity: Pauses and backtracks to allow the cleavage of a missincorporated nucleotide via POLR1H/RPA12. High Pol I processivity is associated with decreased transcription fidelity. This chain is DNA-directed RNA polymerase I subunit RPA2, found in Mus musculus (Mouse).